We begin with the raw amino-acid sequence, 101 residues long: MISIIIAYATPEKQVEIPLTVEESCTLVVAVKRSGILQQFPEINLSQAIVGIHNKRTALDAGLRDGDRIEIYRPLTMDPKQARLLRAKRGKIRRMVRGEAG.

The protein belongs to the UPF0125 (RnfH) family.

This is Protein RnfH from Coxiella burnetii (strain CbuG_Q212) (Coxiella burnetii (strain Q212)).